A 602-amino-acid polypeptide reads, in one-letter code: Myotubularin (602 aa).

Residues 1-16 are compositionally biased toward polar residues; the sequence is MATSSTPKYNSNSLEN. The tract at residues 1–33 is disordered; that stretch reads MATSSTPKYNSNSLENSVRRSPGDGINHEQNDE. Over residues 17-33 the composition is skewed to basic and acidic residues; sequence SVRRSPGDGINHEQNDE. The 69-residue stretch at 28–96 folds into the GRAM domain; it reads HEQNDEISRL…GVIARIEKMG (69 aa). The region spanning 162-537 is the Myotubularin phosphatase domain; it reads GWAVYDAMTE…RHLELWVNYY (376 aa). The a 1,2-diacyl-sn-glycero-3-phospho-(1D-myo-inositol-3,5-bisphosphate) site is built by asparagine 287, asparagine 312, and isoleucine 313. Asparagine 287, asparagine 312, and isoleucine 313 together coordinate a 1,2-diacyl-sn-glycero-3-phospho-(1D-myo-inositol-3-phosphate). Cysteine 374 functions as the Phosphocysteine intermediate in the catalytic mechanism. A 1,2-diacyl-sn-glycero-3-phospho-(1D-myo-inositol-3,5-bisphosphate) is bound by residues serine 375, aspartate 376, glycine 377, tryptophan 378, aspartate 379, arginine 380, lysine 416, and arginine 420. Residues serine 375, aspartate 376, glycine 377, tryptophan 378, aspartate 379, and arginine 380 each coordinate a 1,2-diacyl-sn-glycero-3-phospho-(1D-myo-inositol-3-phosphate). Arginine 420 provides a ligand contact to a 1,2-diacyl-sn-glycero-3-phospho-(1D-myo-inositol-3-phosphate). The interval 577–602 is disordered; the sequence is NSPKINRSTTSPSSPSQMMPQVQTPF. Positions 584-602 are enriched in low complexity; the sequence is STTSPSSPSQMMPQVQTPF.

This sequence belongs to the protein-tyrosine phosphatase family. Non-receptor class myotubularin subfamily.

The protein localises to the cytoplasm. The protein resides in the cell membrane. Its subcellular location is the cell projection. It localises to the filopodium. It is found in the ruffle. The protein localises to the late endosome. The protein resides in the myofibril. Its subcellular location is the sarcomere. The catalysed reaction is a 1,2-diacyl-sn-glycero-3-phospho-(1D-myo-inositol-3-phosphate) + H2O = a 1,2-diacyl-sn-glycero-3-phospho-(1D-myo-inositol) + phosphate. It carries out the reaction a 1,2-diacyl-sn-glycero-3-phospho-(1D-myo-inositol-3,5-bisphosphate) + H2O = a 1,2-diacyl-sn-glycero-3-phospho-(1D-myo-inositol-5-phosphate) + phosphate. It catalyses the reaction 1,2-dioctanoyl-sn-glycero-3-phospho-(1-D-myo-inositol-3-phosphate) + H2O = 1,2-dioctanoyl-sn-glycero-3-phospho-(1D-myo-inositol) + phosphate. The enzyme catalyses 1,2-dioctanoyl-sn-glycero-3-phospho-(1D-myo-inositol-3,5-bisphosphate) + H2O = 1,2-dioctanoyl-sn-glycero-3-phospho-(1D-myo-inositol-5-phosphate) + phosphate. The catalysed reaction is 1,2-dihexadecanoyl-sn-glycero-3-phospho-(1D-myo-inositol-3,5-phosphate) + H2O = 1,2-dihexadecanoyl-sn-glycero-3-phospho-(1D-myo-inositol-5-phosphate) + phosphate. In terms of biological role, lipid phosphatase which dephosphorylates phosphatidylinositol 3-monophosphate (PI3P) and phosphatidylinositol 3,5-bisphosphate (PI(3,5)P2). This chain is Myotubularin (mtm1), found in Xenopus laevis (African clawed frog).